The sequence spans 380 residues: Cystathionine beta-lyase (380 aa).

N6-(pyridoxal phosphate)lysine is present on K196.

Belongs to the trans-sulfuration enzymes family. The cofactor is pyridoxal 5'-phosphate.

The protein resides in the cytoplasm. The enzyme catalyses L,L-cystathionine + H2O = L-homocysteine + pyruvate + NH4(+). The catalysed reaction is an S-substituted L-cysteine + H2O = a thiol + pyruvate + NH4(+). It participates in amino-acid biosynthesis; L-methionine biosynthesis via de novo pathway; L-homocysteine from L-cystathionine: step 1/1. Functionally, the enzymatic degradation of amino acids in cheese is believed to generate aroma compounds and therefore to be essential for flavor development. Cystathionine beta-lyase (CBL) can convert cystathionine to homocysteine but is also able to catalyze an alpha, gamma elimination. With methionine as a substrate, it produces volatile sulfur compounds which are important for flavor formation in Gouda cheese. This chain is Cystathionine beta-lyase (metC), found in Lactococcus lactis subsp. lactis (strain IL1403) (Streptococcus lactis).